A 378-amino-acid polypeptide reads, in one-letter code: Ferredoxin--NADP reductase, root isozyme, chloroplastic (378 aa).

The span at 1 to 17 (MATAVASQVAVSAPAGS) shows a compositional bias: low complexity. A disordered region spans residues 1-27 (MATAVASQVAVSAPAGSDRGLRSSGIQ). The N-terminal 62 residues, 1–62 (MATAVASQVA…PRHANKVLCM (62 aa)), are a transit peptide targeting the chloroplast. Positions 93-221 (KEPYTATIVS…TGPSGKIMLL (129 aa)) constitute an FAD-binding FR-type domain. FAD-binding positions include 153 to 156 (RLYS), 174 to 176 (CVR), Y180, 195 to 197 (VCS), and T237. NADP(+) contacts are provided by S156 and R176. NADP(+) contacts are provided by residues T237, 269–270 (VA), 299–300 (SR), K309, 337–338 (GL), and E376.

This sequence belongs to the ferredoxin--NADP reductase type 1 family. FAD serves as cofactor.

Its subcellular location is the plastid. It localises to the chloroplast. The enzyme catalyses 2 reduced [2Fe-2S]-[ferredoxin] + NADP(+) + H(+) = 2 oxidized [2Fe-2S]-[ferredoxin] + NADPH. It functions in the pathway energy metabolism; photosynthesis. In terms of biological role, may play a key role in regulating the relative amounts of cyclic and non-cyclic electron flow to meet the demands of the plant for ATP and reducing power. Is involved in nitrate assimilation. The polypeptide is Ferredoxin--NADP reductase, root isozyme, chloroplastic (Oryza sativa subsp. japonica (Rice)).